A 375-amino-acid chain; its full sequence is Pectate lyase C (375 aa).

The first 22 residues, 1-22 (MKSLITPITAGLLLALSQPLLA), serve as a signal peptide directing secretion. An intrachain disulfide couples C94 to C177. D151, D153, E188, and D192 together coordinate Ca(2+). R240 is an active-site residue. The cysteines at positions 351 and 374 are disulfide-linked.

The protein belongs to the polysaccharide lyase 1 family. PLADES subfamily. It depends on Ca(2+) as a cofactor.

It localises to the secreted. The catalysed reaction is Eliminative cleavage of (1-&gt;4)-alpha-D-galacturonan to give oligosaccharides with 4-deoxy-alpha-D-galact-4-enuronosyl groups at their non-reducing ends.. The protein operates within glycan metabolism; pectin degradation; 2-dehydro-3-deoxy-D-gluconate from pectin: step 2/5. Its function is as follows. Involved in maceration and soft-rotting of plant tissue. The protein is Pectate lyase C of Dickeya chrysanthemi (Pectobacterium chrysanthemi).